Reading from the N-terminus, the 125-residue chain is uncharacterized protein (125 aa).

It belongs to the asfivirus B125R family.

This is an uncharacterized protein from Ornithodoros (relapsing fever ticks).